We begin with the raw amino-acid sequence, 322 residues long: Eukaryotic translation initiation factor 3 subunit I (322 aa).

5 WD repeats span residues 4 to 43 (GHER…RLGT), 46 to 85 (GHQG…VIAS), 141 to 180 (MTES…KVVD), 184 to 223 (DHSA…CLKS), and 281 to 322 (GHFG…NIFE).

Belongs to the eIF-3 subunit I family. As to quaternary structure, component of the eukaryotic translation initiation factor 3 (eIF-3) complex. The eIF-3 complex interacts with pix.

It localises to the cytoplasm. Functionally, component of the eukaryotic translation initiation factor 3 (eIF-3) complex, which is involved in protein synthesis of a specialized repertoire of mRNAs and, together with other initiation factors, stimulates binding of mRNA and methionyl-tRNAi to the 40S ribosome. The eIF-3 complex specifically targets and initiates translation of a subset of mRNAs involved in cell proliferation. This chain is Eukaryotic translation initiation factor 3 subunit I, found in Drosophila yakuba (Fruit fly).